A 29-amino-acid chain; its full sequence is Galanin (29 aa).

A29 carries the alanine amide modification.

It belongs to the galanin family.

The protein resides in the secreted. Contracts smooth muscle of the gastrointestinal and genitourinary tract, regulates growth hormone release, modulates insulin release, and may be involved in the control of adrenal secretion. The protein is Galanin (gal) of Amia calva (Bowfin).